The following is a 1976-amino-acid chain: Myosin-10 (1976 aa).

Arg18 is modified (omega-N-methylarginine). Residues 31–81 (TAKKLVWIPSERHGFEAASIKEERGDEVMVELAENGKKAMVNKDDIQKMNP) enclose the Myosin N-terminal SH3-like domain. Positions 85–783 (SKVEDMAELT…VLAHLEEERD (699 aa)) constitute a Myosin motor domain. 178–185 (GESGAGKT) is a binding site for ATP. Lys442 carries the post-translational modification N6-acetyllysine. An actin-binding region spans residues 661–683 (LTKLMATLRNTNPNFVRCIIPNH). Positions 786 to 815 (ITDIIIFFQAVCRGYLARKAFAKKQQQLSA) constitute an IQ domain. Positions 845–1976 (LQVTRQEEEL…VNETQPPQSE (1132 aa)) form a coiled coil. The tract at residues 1125 to 1175 (EDFESEKASRNKAEKQKRDLSEELEALKTELEDTLDTTAAQQELRTKREQE) is disordered. The segment covering 1129–1155 (SEKASRNKAEKQKRDLSEELEALKTEL) has biased composition (basic and acidic residues). Residue Ser1145 is modified to Phosphoserine. Lys1241, Lys1301, and Lys1645 each carry N6-acetyllysine. 2 disordered regions span residues 1697 to 1718 (ASSE…DEIA) and 1874 to 1976 (KANA…PQSE). A compositionally biased stretch (basic and acidic residues) spans 1698–1708 (SSERARRHAEQ). At Arg1930 the chain carries Omega-N-methylarginine. A phosphoserine mark is found at Ser1935, Ser1937, Ser1938, and Ser1939. Arg1940 is subject to Omega-N-methylarginine. Residues Ser1952 and Ser1956 each carry the phosphoserine modification. Thr1960 is modified (phosphothreonine). The span at 1967–1976 (VNETQPPQSE) shows a compositional bias: polar residues. Ser1975 carries the phosphoserine modification.

It belongs to the TRAFAC class myosin-kinesin ATPase superfamily. Myosin family. As to quaternary structure, myosin is a hexameric protein that consists of 2 heavy chain subunits (MHC), 2 alkali light chain subunits (MLC) and 2 regulatory light chain subunits (MLC-2). Interacts with PLEKHG6. Interacts with ECPAS. Interacts with KIF26B. Interacts with LARP6. Interacts with MCC. Interacts with CFAP95. In terms of processing, phosphorylated by ABL2.

Its subcellular location is the cell projection. The protein localises to the lamellipodium. Its function is as follows. Involved with LARP6 in the stabilization of type I collagen mRNAs for CO1A1 and CO1A2. During cell spreading, plays an important role in cytoskeleton reorganization, focal contacts formation (in the central part but not the margins of spreading cells), and lamellipodial extension; this function is mechanically antagonized by MYH9. Cellular myosin that appears to play a role in cytokinesis, cell shape, and specialized functions such as secretion and capping. This is Myosin-10 (Myh10) from Rattus norvegicus (Rat).